Here is a 205-residue protein sequence, read N- to C-terminus: Dephospho-CoA kinase (205 aa).

The region spanning 15-205 (VIGLTGGIAT…VERALDQASI (191 aa)) is the DPCK domain. 23 to 28 (ATGKST) contacts ATP.

Belongs to the CoaE family.

The protein resides in the cytoplasm. It carries out the reaction 3'-dephospho-CoA + ATP = ADP + CoA + H(+). The protein operates within cofactor biosynthesis; coenzyme A biosynthesis; CoA from (R)-pantothenate: step 5/5. Its function is as follows. Catalyzes the phosphorylation of the 3'-hydroxyl group of dephosphocoenzyme A to form coenzyme A. The protein is Dephospho-CoA kinase of Gloeobacter violaceus (strain ATCC 29082 / PCC 7421).